The sequence spans 450 residues: Phosphoglucosamine mutase (450 aa).

The active-site Phosphoserine intermediate is serine 97. Mg(2+) contacts are provided by serine 97, aspartate 236, aspartate 238, and aspartate 240. At serine 97 the chain carries Phosphoserine.

It belongs to the phosphohexose mutase family. Mg(2+) is required as a cofactor. In terms of processing, activated by phosphorylation.

It carries out the reaction alpha-D-glucosamine 1-phosphate = D-glucosamine 6-phosphate. Its function is as follows. Catalyzes the conversion of glucosamine-6-phosphate to glucosamine-1-phosphate. This Prochlorococcus marinus (strain MIT 9312) protein is Phosphoglucosamine mutase.